The chain runs to 350 residues: Uroporphyrinogen decarboxylase (350 aa).

Residues 27-31 (RQAGR), Phe-46, Asp-76, Tyr-152, Ser-207, and His-321 contribute to the substrate site.

Belongs to the uroporphyrinogen decarboxylase family. As to quaternary structure, homodimer.

Its subcellular location is the cytoplasm. The catalysed reaction is uroporphyrinogen III + 4 H(+) = coproporphyrinogen III + 4 CO2. It participates in porphyrin-containing compound metabolism; protoporphyrin-IX biosynthesis; coproporphyrinogen-III from 5-aminolevulinate: step 4/4. Catalyzes the decarboxylation of four acetate groups of uroporphyrinogen-III to yield coproporphyrinogen-III. The chain is Uroporphyrinogen decarboxylase from Listeria welshimeri serovar 6b (strain ATCC 35897 / DSM 20650 / CCUG 15529 / CIP 8149 / NCTC 11857 / SLCC 5334 / V8).